A 532-amino-acid chain; its full sequence is Cytochrome P450 99A2 (532 aa).

Residues 30 to 50 (SAATLTLVSLLTLPILLALLT) traverse the membrane as a helical segment. A heme-binding site is contributed by C468. Residues 473 to 493 (FGMVLLELIVARLLYYFDWSL) form a helical membrane-spanning segment.

It belongs to the cytochrome P450 family. Requires heme as cofactor.

The protein localises to the membrane. Functionally, involved in momilactone phytoalexins biosynthesis. Participates in the biosynthetic steps between 9-beta-pimara-7,15-diene and 3-beta-hydroxy-9-beta-pimara-7,15-dien-19,6-beta-olide. This Oryza sativa subsp. japonica (Rice) protein is Cytochrome P450 99A2 (CYP99A2).